We begin with the raw amino-acid sequence, 2194 residues long: PDZ and LIM domain protein Zasp (2194 aa).

Positions 8 to 90 (QIKLSRFDAQ…NFVITVQRGG (83 aa)) constitute a PDZ domain. The disordered stretch occupies residues 211 to 277 (TGQSTPAFGN…KPPSTGGLPT (67 aa)). The span at 228–253 (PQQLQQPQQQYNQHQQHYHQQQQQQQ) shows a compositional bias: low complexity. One can recognise an LIM zinc-binding 1 domain in the interval 280–339 (NICTECERLITGVFVRIKDKNLHVECFKCATCGTSLKNQGYYNFNNKLYCDIHAKQAAIN). The segment covering 415–435 (AATPQAATATDSPAATASSSD) has biased composition (low complexity). Disordered regions lie at residues 415 to 436 (AATP…SSDN), 457 to 476 (VALA…DQPF), 511 to 558 (GAAA…AVEE), 580 to 611 (SRQS…YIPP), 623 to 692 (VQQV…TTSE), 896 to 940 (AAAA…PRGS), 1223 to 1260 (LTQK…QRTQ), 1297 to 1322 (QSQS…PPAN), 1550 to 1632 (LNAS…QQPE), 1646 to 1738 (QREQ…YGKT), and 1815 to 1837 (APPP…SGYQ). Residues 515 to 530 (PKSPVSYPPQQQQQSP) are compositionally biased toward low complexity. Composition is skewed to polar residues over residues 580 to 590 (SRQSQRGSSFT) and 644 to 667 (VGTS…TASA). Residues 676–692 (SSDSYTSTSTTTTTTSE) are compositionally biased toward low complexity. A compositionally biased stretch (polar residues) spans 1598 to 1610 (QTGSITTGQSYQG). Low complexity-rich tracts occupy residues 1616–1630 (SEQS…YNQQ), 1646–1668 (QREQ…TRSQ), and 1699–1727 (SQSV…QNQS). 3 LIM zinc-binding domains span residues 2018 to 2078 (PLCN…KYLA), 2079 to 2138 (PTCS…LFTT), and 2139 to 2194 (KCFA…NHAR).

As to quaternary structure, interacts with alpha-actinin (Actn). In terms of tissue distribution, expression is first detected in the proctodeum and the midgut primordium. In stage 11 embryos, expression is predominant in the leading edge of epidermal cells adjacent to the amnioserosa. Stage 12 embryos exhibit expression in the midgut and the leading edge. Expressed in several rows of germ band cells next to the leading edge at stage 14. Strong expression is visible in the midgut and pharyngeal muscles of stage 17 embryos. Also expressed in somatic muscles and visceral mesoderm. Colocalizes with mys (beta PS integrin) in myotendinous junctions and with Actn in muscle Z lines.

It localises to the cytoplasm. Its subcellular location is the cytoskeleton. Its function is as follows. Regulator of cell matrix adhesion having two related functions, one upstream of Actn organizing the Z line and the other downstream of integrins regulating assembly of integrin adhesion sites. Also required for the formation of myotendinous junctions in muscles. This chain is PDZ and LIM domain protein Zasp (Zasp52), found in Drosophila melanogaster (Fruit fly).